Consider the following 442-residue polypeptide: 3-phosphoshikimate 1-carboxyvinyltransferase (442 aa).

3 residues coordinate 3-phosphoshikimate: Lys-25, Ser-26, and Arg-30. Lys-25 is a phosphoenolpyruvate binding site. Residues Gly-97 and Arg-125 each coordinate phosphoenolpyruvate. 3-phosphoshikimate-binding residues include Ser-170, Gln-172, Asp-323, and Lys-350. Gln-172 contacts phosphoenolpyruvate. Asp-323 functions as the Proton acceptor in the catalytic mechanism. Residues Arg-354 and Arg-399 each coordinate phosphoenolpyruvate.

The protein belongs to the EPSP synthase family. Monomer.

It localises to the cytoplasm. It carries out the reaction 3-phosphoshikimate + phosphoenolpyruvate = 5-O-(1-carboxyvinyl)-3-phosphoshikimate + phosphate. Its pathway is metabolic intermediate biosynthesis; chorismate biosynthesis; chorismate from D-erythrose 4-phosphate and phosphoenolpyruvate: step 6/7. Functionally, catalyzes the transfer of the enolpyruvyl moiety of phosphoenolpyruvate (PEP) to the 5-hydroxyl of shikimate-3-phosphate (S3P) to produce enolpyruvyl shikimate-3-phosphate and inorganic phosphate. This Bartonella henselae (strain ATCC 49882 / DSM 28221 / CCUG 30454 / Houston 1) (Rochalimaea henselae) protein is 3-phosphoshikimate 1-carboxyvinyltransferase.